Reading from the N-terminus, the 391-residue chain is Polyketide synthase 3 (391 aa).

C164 is an active-site residue.

It belongs to the thiolase-like superfamily. Chalcone/stilbene synthases family. Homodimer.

It catalyses the reaction (E)-4-coumaroyl-CoA + 3 malonyl-CoA + 3 H(+) = 2',4,4',6'-tetrahydroxychalcone + 3 CO2 + 4 CoA. The protein operates within secondary metabolite biosynthesis; flavonoid biosynthesis. Functionally, polyketide synthase producing p-coumaryltriacetic acid lactone (CTAL) and slightly naringenin chalcone. Can use p-coumaryl-CoA as substrate. The protein is Polyketide synthase 3 (PKS3) of Rubus idaeus (Raspberry).